The chain runs to 136 residues: Large ribosomal subunit protein uL16 (136 aa).

It belongs to the universal ribosomal protein uL16 family. As to quaternary structure, part of the 50S ribosomal subunit.

Its function is as follows. Binds 23S rRNA and is also seen to make contacts with the A and possibly P site tRNAs. The protein is Large ribosomal subunit protein uL16 of Ehrlichia canis (strain Jake).